The sequence spans 570 residues: High-affinity hexose transporter HXT6 (570 aa).

Topologically, residues 1–60 (MSQDAAIAEQTPVEHLSAVDSASHSVLSTPSNKAERDEIKAYGEGEEHEPVVEIPKRPAS) are cytoplasmic. The chain crosses the membrane as a helical span at residues 61–81 (AYVTVSIMCIMIAFGGFVFGW). Residues 82 to 116 (DTGTISGFINQTDFIRRFGMKHKDGTNYLSKVRTG) lie on the Extracellular side of the membrane. Asn-91 is a glycosylation site (N-linked (GlcNAc...) asparagine). Residues 117-137 (LIVSIFNIGCAIGGIILSKLG) traverse the membrane as a helical segment. The Cytoplasmic segment spans residues 138-143 (DMYGRK). Residues 144–164 (VGLIVVVVIYIIGIIIQIASI) form a helical membrane-spanning segment. At 165–174 (NKWYQYFIGR) the chain is on the extracellular side. The chain crosses the membrane as a helical span at residues 175–195 (IISGLGVGGIAVLSPMLISEV). The Cytoplasmic portion of the chain corresponds to 196–201 (SPKHLR). The helical transmembrane segment at 202 to 222 (GTLVSCYQLMITAGIFLGYCT) threads the bilayer. At 223 to 236 (NFGTKNYSNSVQWR) the chain is on the extracellular side. Asn-228 is a glycosylation site (N-linked (GlcNAc...) asparagine). A helical transmembrane segment spans residues 237-257 (VPLGLCFAWALFMIGGMTFVP). The Cytoplasmic portion of the chain corresponds to 258–340 (ESPRYLAEVG…IQSLQQLTGD (83 aa)). A helical membrane pass occupies residues 341–357 (NYFFYYGTTIFKAVGLS). The Extracellular segment spans residues 358–363 (DSFETS). Residues 364–381 (IVLGIVNFASTFVGIYVV) form a helical membrane-spanning segment. Over 382–388 (ERYGRRT) the chain is Cytoplasmic. A helical transmembrane segment spans residues 389–409 (CLLWGAASMTACMVVYASVGV). Residues 410–431 (TRLWPNGQDQPSSKGAGNCMIV) lie on the Extracellular side of the membrane. A helical membrane pass occupies residues 432–452 (FACFYIFCFATTWAPIPYVVV). At 453–469 (SETFPLRVKSKAMSIAT) the chain is on the cytoplasmic side. Residues 470 to 490 (AANWLWGFLIGFFTPFITGAI) traverse the membrane as a helical segment. Asn-491 is a topological domain (extracellular). A helical transmembrane segment spans residues 492-512 (FYYGYVFMGCLVFMFFYVLLV). Residues 513-570 (VPETKGLTLEEVNTMWEEGVLPWKSASWVPPSRRGANYDAEEMAHDDKPLYKRMFSTK) lie on the Cytoplasmic side of the membrane. Lys-560 participates in a covalent cross-link: Glycyl lysine isopeptide (Lys-Gly) (interchain with G-Cter in ubiquitin).

This sequence belongs to the major facilitator superfamily. Sugar transporter (TC 2.A.1.1) family.

It localises to the membrane. Functionally, high-affinity glucose transporter. The sequence is that of High-affinity hexose transporter HXT6 (HXT6) from Saccharomyces cerevisiae (strain ATCC 204508 / S288c) (Baker's yeast).